The sequence spans 132 residues: D-ribose pyranase (132 aa).

Histidine 20 (proton donor) is an active-site residue. Substrate-binding positions include aspartate 28, histidine 99, and 121–123 (YAN).

It belongs to the RbsD / FucU family. RbsD subfamily. In terms of assembly, homodecamer.

The protein localises to the cytoplasm. The enzyme catalyses beta-D-ribopyranose = beta-D-ribofuranose. It participates in carbohydrate metabolism; D-ribose degradation; D-ribose 5-phosphate from beta-D-ribopyranose: step 1/2. Its function is as follows. Catalyzes the interconversion of beta-pyran and beta-furan forms of D-ribose. The protein is D-ribose pyranase of Chromobacterium violaceum (strain ATCC 12472 / DSM 30191 / JCM 1249 / CCUG 213 / NBRC 12614 / NCIMB 9131 / NCTC 9757 / MK).